A 203-amino-acid chain; its full sequence is Selenocysteine-containing peroxiredoxin PrxU (203 aa).

The 159-residue stretch at 2–160 folds into the Thioredoxin domain; that stretch reads VSVGKKAPDF…TLRQIQAFQL (159 aa). Selenocysteine 47 is a catalytic residue. Selenocysteine 47 is a non-standard amino acid (selenocysteine).

Belongs to the peroxiredoxin family. AhpC/Prx1 subfamily.

It catalyses the reaction a hydroperoxide + [thioredoxin]-dithiol = an alcohol + [thioredoxin]-disulfide + H2O. Thiol-specific peroxidase that catalyzes the reduction of hydrogen peroxide and organic hydroperoxides to water and alcohols, respectively. Plays a role in cell protection against oxidative stress by detoxifying peroxides. In Peptoclostridium acidaminophilum (Eubacterium acidaminophilum), this protein is Selenocysteine-containing peroxiredoxin PrxU.